Reading from the N-terminus, the 198-residue chain is Dephospho-CoA kinase (198 aa).

One can recognise a DPCK domain in the interval 4–198 (RIGLTGGIAS…CGLRADGTTW (195 aa)). 12–17 (ASGKSS) is an ATP binding site.

This sequence belongs to the CoaE family.

It is found in the cytoplasm. The catalysed reaction is 3'-dephospho-CoA + ATP = ADP + CoA + H(+). The protein operates within cofactor biosynthesis; coenzyme A biosynthesis; CoA from (R)-pantothenate: step 5/5. Its function is as follows. Catalyzes the phosphorylation of the 3'-hydroxyl group of dephosphocoenzyme A to form coenzyme A. This is Dephospho-CoA kinase from Parasynechococcus marenigrum (strain WH8102).